The primary structure comprises 452 residues: Glycoprotein endo-alpha-1,2-mannosidase-like protein (452 aa).

Topologically, residues 1–8 are cytoplasmic; it reads MARRRRRA. The helical; Signal-anchor for type II membrane protein transmembrane segment at 9 to 29 threads the bilayer; it reads CIALFLVLLFAFGTLMGLRTL. At 30-452 the chain is on the lumenal side; that stretch reads KAPDGLPALG…FIKEKEQWLM (423 aa). The interval 40–90 is disordered; sequence PGPELAPFERRPEGNPAPARAPAAPAAPPPPPPRTAAPRASLGPAEADPAP. The segment covering 64 to 74 has biased composition (pro residues); it reads PAAPPPPPPRT.

This sequence belongs to the glycosyl hydrolase 99 family.

It localises to the golgi apparatus membrane. The sequence is that of Glycoprotein endo-alpha-1,2-mannosidase-like protein (Maneal) from Mus musculus (Mouse).